The sequence spans 157 residues: Large ribosomal subunit protein eL24 (157 aa).

Residues 95–157 (NQKPEVRKAQ…VSAPRVGGKR (63 aa)) are disordered. Residues 96–117 (QKPEVRKAQREQAIRAAKEAKK) show a composition bias toward basic and acidic residues. Residues 123–145 (KKQTTQSSKAPAKSAQKQKIAKP) show a composition bias toward low complexity.

This sequence belongs to the eukaryotic ribosomal protein eL24 family. As to quaternary structure, component of the large ribosomal subunit.

It is found in the cytoplasm. In terms of biological role, component of the large ribosomal subunit. The ribosome is a large ribonucleoprotein complex responsible for the synthesis of proteins in the cell. Plays an essential role in early embryonic development. This is Large ribosomal subunit protein eL24 (rpl24) from Danio rerio (Zebrafish).